Reading from the N-terminus, the 150-residue chain is 3-hydroxyacyl-[acyl-carrier-protein] dehydratase FabZ (150 aa).

The active site involves histidine 54.

It belongs to the thioester dehydratase family. FabZ subfamily.

It is found in the cytoplasm. It catalyses the reaction a (3R)-hydroxyacyl-[ACP] = a (2E)-enoyl-[ACP] + H2O. In terms of biological role, involved in unsaturated fatty acids biosynthesis. Catalyzes the dehydration of short chain beta-hydroxyacyl-ACPs and long chain saturated and unsaturated beta-hydroxyacyl-ACPs. This chain is 3-hydroxyacyl-[acyl-carrier-protein] dehydratase FabZ, found in Vibrio parahaemolyticus serotype O3:K6 (strain RIMD 2210633).